We begin with the raw amino-acid sequence, 382 residues long: Succinyl-diaminopimelate desuccinylase (382 aa).

Histidine 72 is a Zn(2+) binding site. Aspartate 74 is a catalytic residue. Aspartate 105 lines the Zn(2+) pocket. The active-site Proton acceptor is glutamate 139. Residues glutamate 140, glutamate 168, and histidine 354 each contribute to the Zn(2+) site.

It belongs to the peptidase M20A family. DapE subfamily. In terms of assembly, homodimer. Zn(2+) serves as cofactor. The cofactor is Co(2+).

The enzyme catalyses N-succinyl-(2S,6S)-2,6-diaminopimelate + H2O = (2S,6S)-2,6-diaminopimelate + succinate. Its pathway is amino-acid biosynthesis; L-lysine biosynthesis via DAP pathway; LL-2,6-diaminopimelate from (S)-tetrahydrodipicolinate (succinylase route): step 3/3. In terms of biological role, catalyzes the hydrolysis of N-succinyl-L,L-diaminopimelic acid (SDAP), forming succinate and LL-2,6-diaminopimelate (DAP), an intermediate involved in the bacterial biosynthesis of lysine and meso-diaminopimelic acid, an essential component of bacterial cell walls. The protein is Succinyl-diaminopimelate desuccinylase of Shewanella amazonensis (strain ATCC BAA-1098 / SB2B).